The chain runs to 142 residues: Large ribosomal subunit protein uL13 (142 aa).

Belongs to the universal ribosomal protein uL13 family. As to quaternary structure, part of the 50S ribosomal subunit.

This protein is one of the early assembly proteins of the 50S ribosomal subunit, although it is not seen to bind rRNA by itself. It is important during the early stages of 50S assembly. The protein is Large ribosomal subunit protein uL13 of Hahella chejuensis (strain KCTC 2396).